Consider the following 617-residue polypeptide: Chaperone protein HscA homolog (617 aa).

Belongs to the heat shock protein 70 family.

Chaperone involved in the maturation of iron-sulfur cluster-containing proteins. Has a low intrinsic ATPase activity which is markedly stimulated by HscB. The sequence is that of Chaperone protein HscA homolog from Aliivibrio salmonicida (strain LFI1238) (Vibrio salmonicida (strain LFI1238)).